Here is a 148-residue protein sequence, read N- to C-terminus: Ferredoxin-thioredoxin reductase catalytic chain, chloroplastic (148 aa).

The N-terminal 35 residues, 1–35, are a transit peptide targeting the chloroplast; that stretch reads MKALQASTSYSFFSKSSSATLQRRTHRPQCVILSK. Cys87 contributes to the [4Fe-4S] cluster binding site. Cys89 functions as the Nucleophile in the catalytic mechanism. Cys89 and Cys119 are joined by a disulfide. [4Fe-4S] cluster contacts are provided by Cys106, Cys108, and Cys117.

The protein belongs to the ferredoxin thioredoxin reductase beta subunit family. As to quaternary structure, heterodimer of subunit A (variable subunit) and subunit B (catalytic subunit). Heterodimeric FTR forms a complex with ferredoxin and thioredoxin. It depends on [4Fe-4S] cluster as a cofactor.

The protein localises to the plastid. It is found in the chloroplast. The enzyme catalyses [thioredoxin]-disulfide + 2 reduced [2Fe-2S]-[ferredoxin] + 2 H(+) = [thioredoxin]-dithiol + 2 oxidized [2Fe-2S]-[ferredoxin]. Catalytic subunit of the ferredoxin-thioredoxin reductase (FTR), which catalyzes the two-electron reduction of thioredoxins by the electrons provided by reduced ferredoxin. This is Ferredoxin-thioredoxin reductase catalytic chain, chloroplastic from Spinacia oleracea (Spinach).